A 297-amino-acid chain; its full sequence is Probable endonuclease 4 (297 aa).

Zn(2+) contacts are provided by histidine 68, histidine 109, glutamate 144, aspartate 178, histidine 181, histidine 213, aspartate 226, histidine 228, and glutamate 258.

The protein belongs to the AP endonuclease 2 family. Requires Zn(2+) as cofactor.

The catalysed reaction is Endonucleolytic cleavage to 5'-phosphooligonucleotide end-products.. Endonuclease IV plays a role in DNA repair. It cleaves phosphodiester bonds at apurinic or apyrimidinic (AP) sites, generating a 3'-hydroxyl group and a 5'-terminal sugar phosphate. In Lysinibacillus sphaericus (strain C3-41), this protein is Probable endonuclease 4.